A 226-amino-acid polypeptide reads, in one-letter code: Uracil-DNA glycosylase (226 aa).

Catalysis depends on Asp64, which acts as the Proton acceptor.

It belongs to the uracil-DNA glycosylase (UDG) superfamily. UNG family.

Its subcellular location is the cytoplasm. It carries out the reaction Hydrolyzes single-stranded DNA or mismatched double-stranded DNA and polynucleotides, releasing free uracil.. Excises uracil residues from the DNA which can arise as a result of misincorporation of dUMP residues by DNA polymerase or due to deamination of cytosine. This is Uracil-DNA glycosylase from Vibrio vulnificus (strain CMCP6).